The sequence spans 634 residues: MQRSIATVSLSGTLPEKLEAIAAAGFDGVEIFENDLLHYDGSPRDVRRLCADLGLEILLFQPFRDFEGCRRERLGRNLERAERKFDLMQELGTDLVLVCSNVAADALGEPALLADDLRQLAERAAVRGLRIGYEALAWGRQVNTWEQAWDLVRRADQANLGLILDSFHTLSLDGDPRGIADLPGEKIFFVQMADAPLLAMDVLEWSRHFRCFPGQGGFDLAGFLAPVVASGYRGPLSLEVFNDGFRAAPTRANAVDGLRSLLYLEEKTREHLQRQTPHVAVDELFAPPPASLCDGIEFLEFAVDETLGARLGQWLQRLGFARAGEHRSKNVSLLRQGDINLVLNAEPYSFAHGFFEAHGPSLCATALCVRDAGQALERARAYGGQPYRGLLGPNEREIPAVRALDGSLLYLVERHTEGRSIYDSDFVTNDADTSGLGLRRVDHVALALPAEGLDSWVLFYKSLFDFGADDEVVLPDPYGLVTSRAVRSPCGSVRLPLNISEDRNTAIARSLSSYRGSGVHHIAFDCADIFAAVAQAKEAGVALLEIPLNYYDDLAARFDFDDEFLSELAYYNVLYDRDAQGGELFHVFTEPFEERFFFEILQRRHGYAGYGAANVPVRLAAMAQARRGVRRVKL.

A divalent metal cation is bound by residues Glu-134, Asp-165, Gln-191, and Glu-239. VOC domains follow at residues Gly-295 to Arg-414 and Arg-440 to Glu-590. 3 residues coordinate Mg(2+): His-443, His-521, and Glu-599.

This sequence belongs to the bacterial two-domain DSD family. As to quaternary structure, homodimer. Co(2+) is required as a cofactor. Ni(2+) serves as cofactor. It depends on Mg(2+) as a cofactor. Requires Mn(2+) as cofactor.

It carries out the reaction 3-dehydroshikimate = 3,4-dihydroxybenzoate + H2O. It functions in the pathway aromatic compound metabolism; 3,4-dihydroxybenzoate biosynthesis. Its function is as follows. Catalyzes the conversion of 3-dehydroshikimate to protocatechuate (3,4-dihydroxybenzoate), a common intermediate of quinate and shikimate degradation pathways. Is required for growth on either quinate or shikimate as a sole carbon source. In Pseudomonas aeruginosa (strain ATCC 15692 / DSM 22644 / CIP 104116 / JCM 14847 / LMG 12228 / 1C / PRS 101 / PAO1), this protein is 3-dehydroshikimate dehydratase.